Reading from the N-terminus, the 427-residue chain is Glutamate-1-semialdehyde 2,1-aminomutase (427 aa).

N6-(pyridoxal phosphate)lysine is present on K265.

This sequence belongs to the class-III pyridoxal-phosphate-dependent aminotransferase family. HemL subfamily. Homodimer. It depends on pyridoxal 5'-phosphate as a cofactor.

The protein localises to the cytoplasm. It catalyses the reaction (S)-4-amino-5-oxopentanoate = 5-aminolevulinate. The protein operates within porphyrin-containing compound metabolism; protoporphyrin-IX biosynthesis; 5-aminolevulinate from L-glutamyl-tRNA(Glu): step 2/2. The sequence is that of Glutamate-1-semialdehyde 2,1-aminomutase from Pseudomonas putida (strain W619).